Consider the following 283-residue polypeptide: Protein/nucleic acid deglycase HchA (283 aa).

His86, Glu91, and His123 together coordinate Zn(2+). Residue Cys185 is the Nucleophile of the active site.

This sequence belongs to the peptidase C56 family. HchA subfamily. In terms of assembly, homodimer.

It is found in the cytoplasm. It catalyses the reaction N(omega)-(1-hydroxy-2-oxopropyl)-L-arginyl-[protein] + H2O = lactate + L-arginyl-[protein] + H(+). The catalysed reaction is N(6)-(1-hydroxy-2-oxopropyl)-L-lysyl-[protein] + H2O = lactate + L-lysyl-[protein] + H(+). It carries out the reaction S-(1-hydroxy-2-oxopropyl)-L-cysteinyl-[protein] + H2O = lactate + L-cysteinyl-[protein] + H(+). The enzyme catalyses N(omega)-(1-hydroxy-2-oxoethyl)-L-arginyl-[protein] + H2O = L-arginyl-[protein] + glycolate + H(+). It catalyses the reaction N(6)-(1-hydroxy-2-oxoethyl)-L-lysyl-[protein] + H2O = glycolate + L-lysyl-[protein] + H(+). The catalysed reaction is S-(1-hydroxy-2-oxoethyl)-L-cysteinyl-[protein] + H2O = glycolate + L-cysteinyl-[protein] + H(+). It carries out the reaction N(2)-(1-hydroxy-2-oxopropyl)-dGTP + H2O = lactate + dGTP + H(+). The enzyme catalyses N(2)-(1-hydroxy-2-oxopropyl)-GTP + H2O = lactate + GTP + H(+). It catalyses the reaction N(2)-(1-hydroxy-2-oxopropyl)-GDP + H2O = lactate + GDP + H(+). The catalysed reaction is N(2)-(1-hydroxy-2-oxopropyl)-GMP + H2O = lactate + GMP + H(+). It carries out the reaction N(2)-(1-hydroxy-2-oxoethyl)-dGTP + H2O = dGTP + glycolate + H(+). The enzyme catalyses N(2)-(1-hydroxy-2-oxoethyl)-GTP + H2O = glycolate + GTP + H(+). It catalyses the reaction N(2)-(1-hydroxy-2-oxoethyl)-GDP + H2O = glycolate + GDP + H(+). The catalysed reaction is N(2)-(1-hydroxy-2-oxoethyl)-GMP + H2O = glycolate + GMP + H(+). It carries out the reaction an N(2)-(1-hydroxy-2-oxopropyl)-guanosine in RNA + H2O = a guanosine in RNA + lactate + H(+). The enzyme catalyses an N(2)-(1-hydroxy-2-oxopropyl)-2'-deoxyguanosine in DNA + H2O = a 2'-deoxyguanosine in DNA + lactate + H(+). It catalyses the reaction an N(2)-(1-hydroxy-2-oxoethyl)-guanosine in RNA + H2O = a guanosine in RNA + glycolate + H(+). The catalysed reaction is an N(2)-(1-hydroxy-2-oxoethyl)-2'-deoxyguanosine in DNA + H2O = a 2'-deoxyguanosine in DNA + glycolate + H(+). Functionally, protein and nucleotide deglycase that catalyzes the deglycation of the Maillard adducts formed between amino groups of proteins or nucleotides and reactive carbonyl groups of glyoxals. Thus, functions as a protein deglycase that repairs methylglyoxal- and glyoxal-glycated proteins, and releases repaired proteins and lactate or glycolate, respectively. Deglycates cysteine, arginine and lysine residues in proteins, and thus reactivates these proteins by reversing glycation by glyoxals. Acts on early glycation intermediates (hemithioacetals and aminocarbinols), preventing the formation of Schiff bases and advanced glycation endproducts (AGE). Also functions as a nucleotide deglycase able to repair glycated guanine in the free nucleotide pool (GTP, GDP, GMP, dGTP) and in DNA and RNA. Is thus involved in a major nucleotide repair system named guanine glycation repair (GG repair), dedicated to reversing methylglyoxal and glyoxal damage via nucleotide sanitization and direct nucleic acid repair. Plays an important role in protecting cells from carbonyl stress. This chain is Protein/nucleic acid deglycase HchA, found in Escherichia coli O157:H7.